The following is a 642-amino-acid chain: Threonine--tRNA ligase (642 aa).

The 61-residue stretch at 1–61 folds into the TGS domain; that stretch reads MPVIRFYDGS…REDAFIEFVD (61 aa). The tract at residues 243 to 534 is catalytic; sequence DHRKIGKFLQ…LIEECSGNLP (292 aa). Cysteine 334, histidine 385, and histidine 511 together coordinate Zn(2+).

The protein belongs to the class-II aminoacyl-tRNA synthetase family. As to quaternary structure, homodimer. Zn(2+) is required as a cofactor.

It is found in the cytoplasm. It carries out the reaction tRNA(Thr) + L-threonine + ATP = L-threonyl-tRNA(Thr) + AMP + diphosphate + H(+). Functionally, catalyzes the attachment of threonine to tRNA(Thr) in a two-step reaction: L-threonine is first activated by ATP to form Thr-AMP and then transferred to the acceptor end of tRNA(Thr). Also edits incorrectly charged L-seryl-tRNA(Thr). The polypeptide is Threonine--tRNA ligase (Buchnera aphidicola subsp. Acyrthosiphon pisum (strain APS) (Acyrthosiphon pisum symbiotic bacterium)).